A 212-amino-acid chain; its full sequence is Small ribosomal subunit protein uS19m (212 aa).

The N-terminal 29 residues, 1–29, are a transit peptide targeting the mitochondrion; sequence MAFCTKLGGHWKQGVNVPVSSMLGSLRYM. The RRM domain occupies 31–109; it reads TKLYIGGLSP…FNISVNVAKD (79 aa).

The protein belongs to the universal ribosomal protein uS19 family. As to quaternary structure, component of the mitochondrial ribosome small subunit.

Its subcellular location is the mitochondrion. The RNA-binding domain found in RPS19 may functionally replace the missing mitochondrial RPS13. This chain is Small ribosomal subunit protein uS19m (RPS19), found in Arabidopsis thaliana (Mouse-ear cress).